A 191-amino-acid polypeptide reads, in one-letter code: Adenylate cyclase CyaB (191 aa).

One can recognise a CYTH domain in the interval 9–180 (RFEVEFKYRL…TRSYRTLCEQ (172 aa)). The active-site Proton acceptor is the Y46.

The protein belongs to the adenylyl cyclase CyaB family.

The protein localises to the cytoplasm. It catalyses the reaction ATP = 3',5'-cyclic AMP + diphosphate. Its activity is regulated as follows. Inhibited by GTP. Functionally, in vitro, CyaB catalyzes the biosynthesis of cyclic AMP (cAMP) from ATP. It seems that under the physiological conditions CyaB has no function in cAMP processes. In vitro, it is also able to hydrolyze substrates such as thiamine triphosphate (ThTP) and inorganic triphosphate (PPPi) at a low rate. It has a slight preference for ThTP over ATP and PPPi in the presence of manganese ions. This PPPase activity is probably not of physiological importance. The chain is Adenylate cyclase CyaB (cyaB) from Aeromonas hydrophila.